The sequence spans 159 residues: Keratin-associated protein 9-8 (159 aa).

Repeat copies occupy residues 8 to 12, 13 to 17, 32 to 36, 37 to 41, 46 to 50, 51 to 55, 56 to 60, 65 to 69, 70 to 74, 75 to 79, 80 to 84, 129 to 133, 134 to 138, 139 to 142, and 153 to 157. A 15 X 5 AA repeats of C-C-[RQVSGE]-[SPSNQ]-[TASPI] region spans residues 8 to 157; it reads CCQPTCCRTT…TCVSSCCQPS (150 aa).

Belongs to the KRTAP type 9 family. As to quaternary structure, interacts with hair keratins.

Its function is as follows. In the hair cortex, hair keratin intermediate filaments are embedded in an interfilamentous matrix, consisting of hair keratin-associated proteins (KRTAP), which are essential for the formation of a rigid and resistant hair shaft through their extensive disulfide bond cross-linking with abundant cysteine residues of hair keratins. The matrix proteins include the high-sulfur and high-glycine-tyrosine keratins. The chain is Keratin-associated protein 9-8 (KRTAP9-8) from Homo sapiens (Human).